Reading from the N-terminus, the 1179-residue chain is DNA-directed RNA polymerase subunit beta (1179 aa).

Residues 1153–1162 (MREMEDEDEG) are compositionally biased toward acidic residues. A disordered region spans residues 1153 to 1179 (MREMEDEDEGNGEKLNLVLEGGSLNEE).

Belongs to the RNA polymerase beta chain family. As to quaternary structure, the RNAP catalytic core consists of 2 alpha, 1 beta, 1 beta' and 1 omega subunit. When a sigma factor is associated with the core the holoenzyme is formed, which can initiate transcription.

The catalysed reaction is RNA(n) + a ribonucleoside 5'-triphosphate = RNA(n+1) + diphosphate. DNA-dependent RNA polymerase catalyzes the transcription of DNA into RNA using the four ribonucleoside triphosphates as substrates. The sequence is that of DNA-directed RNA polymerase subunit beta from Brevibacillus brevis (strain 47 / JCM 6285 / NBRC 100599).